The chain runs to 715 residues: Polyribonucleotide nucleotidyltransferase (715 aa).

Mg(2+) contacts are provided by D490 and D496. Positions P557 to I616 constitute a KH domain. Residues G626 to K694 enclose the S1 motif domain.

Belongs to the polyribonucleotide nucleotidyltransferase family. It depends on Mg(2+) as a cofactor.

The protein localises to the cytoplasm. It carries out the reaction RNA(n+1) + phosphate = RNA(n) + a ribonucleoside 5'-diphosphate. Functionally, involved in mRNA degradation. Catalyzes the phosphorolysis of single-stranded polyribonucleotides processively in the 3'- to 5'-direction. This is Polyribonucleotide nucleotidyltransferase from Paracoccus denitrificans (strain Pd 1222).